The chain runs to 1350 residues: Protein transport protein SEC16A homolog (1350 aa).

Disordered stretches follow at residues 26 to 45 (YTPT…GSDS), 73 to 97 (LGND…SIAP), 964 to 1063 (MPPP…TRKV), 1118 to 1216 (AEEA…KPPI), and 1235 to 1350 (QVME…EVEL). Basic and acidic residues predominate over residues 35 to 45 (KELKFDDGSDS). Serine 43 carries the phosphoserine modification. Polar residues predominate over residues 970–1002 (HSTTGNPQVNEYQHQQQEAAKLSYSQSANTMSS). Residues 1150–1168 (SPSSGSWSSGSPTPSENSP) show a composition bias toward low complexity. Polar residues-rich tracts occupy residues 1195-1210 (TYNQ…PPVQ) and 1289-1316 (RSGS…GSVN). Low complexity predominate over residues 1317–1343 (SSSFMSPTSASTFRPSPLNSSSSSLGE).

This sequence belongs to the SEC16 family. In terms of assembly, interacts with SEC13A, SEC13B and SEC31A.

Its subcellular location is the golgi apparatus. The protein resides in the golgi stack. It localises to the endoplasmic reticulum. Required for efficient protein export from the endoplasmic reticulum (ER) to the Golgi by regulating COPII coat dynamics at the ER. Functions as a scaffold and regulator of COPII coat assembly at ER exit sites. The protein is Protein transport protein SEC16A homolog of Arabidopsis thaliana (Mouse-ear cress).